The sequence spans 1709 residues: MGFLPKLLLLASFFPAGQASWGVSSPQDVQGVKGSCLLIPCIFSFPADVEVPDGITAIWYYDYSGQRQVVSHSADPKLVEARFRGRTEFMGNPEHRVCNLLLKDLQPEDSGSYNFRFEISEVNRWSDVKGTLVTVTEEPRVPTIASPVELLEGTEVDFNCSTPYVCLQEQVRLQWQGQDPARSVTFNSQKFEPTGVGHLETLHMAMSWQDHGRILRCQLSVANHRAQSEIHLQVKYAPKGVKILLSPSGRNILPGELVTLTCQVNSSYPAVSSIKWLKDGVRLQTKTGVLHLPQAAWSDAGVYTCQAENGVGSLVSPPISLHIFMAEVQVSPAGPILENQTVTLVCNTPNEAPSDLRYSWYKNHVLLEDAHSHTLRLHLATRADTGFYFCEVQNVHGSERSGPVSVVVNHPPLTPVLTAFLETQAGLVGILHCSVVSEPLATLVLSHGGHILASTSGDSDHSPRFSGTSGPNSLRLEIRDLEETDSGEYKCSATNSLGNATSTLDFHANAARLLISPAAEVVEGQAVTLSCRSGLSPTPDARFSWYLNGALLHEGPGSSLLLPAASSTDAGSYHCRARDGHSASGPSSPAVLTVLYPPRQPTFTTRLDLDAAGAGAGRRGLLLCRVDSDPPARLQLLHKDRVVATSLPSGGGCSTCGGCSPRMKVTKAPNLLRVEIHNPLLEEEGLYLCEASNALGNASTSATFNGQATVLAIAPSHTLQEGTEANLTCNVSREAAGSPANFSWFRNGVLWAQGPLETVTLLPVARTDAALYACRILTEAGAQLSTPVLLSVLYPPDRPKLSALLDMGQGHMALFICTVDSRPLALLALFHGEHLLATSLGPQVPSHGRFQAKAEANSLKLEVRELGLGDSGSYRCEATNVLGSSNTSLFFQVRGAWVQVSPSPELQEGQAVVLSCQVHTGVPEGTSYRWYRDGQPLQESTSATLRFAAITLTQAGAYHCQAQAPGSATTSLAAPISLHVSYAPRHVTLTTLMDTGPGRLGLLLCRVDSDPPAQLRLLHGDRLVASTLQGVGGPEGSSPRLHVAVAPNTLRLEIHGAMLEDEGVYICEASNTLGQASASADFDAQAVNVQVWPGATVREGQLVNLTCLVWTTHPAQLTYTWYQDGQQRLDAHSIPLPNVTVRDATSYRCGVGPPGRAPRLSRPITLDVLYAPRNLRLTYLLESHGGQLALVLCTVDSRPPAQLALSHAGRLLASSTAASVPNTLRLELRGPQPRDEGFYSCSARSPLGQANTSLELRLEGVRVILAPEAAVPEGAPITVTCADPAAHAPTLYTWYHNGRWLQEGPAASLSFLVATRAHAGAYSCQAQDAQGTRSSRPAALQVLYAPQDAVLSSFRDSRARSMAVIQCTVDSEPPAELALSHDGKVLATSSGVHSLASGTGHVQVARNALRLQVQDVPAGDDTYVCTAQNLLGSISTIGRLQVEGARVVAEPGLDVPEGAALNLSCRLLGGPGPVGNSTFAWFWNDRRLHAEPVPTLAFTHVARAQAGMYHCLAELPTGAAASAPVMLRVLYPPKTPTMMVFVEPEGGLRGILDCRVDSEPLASLTLHLGSRLVASSQPQGAPAEPHIHVLASPNALRVDIEALRPSDQGEYICSASNVLGSASTSTYFGVRALHRLHQFQQLLWVLGLLVGLLLLLLGLGACYTWRRRRVCKQSMGENSVEMAFQKETTQLIDPDAATCETSTCAPPLG.

The signal sequence occupies residues 1–19 (MGFLPKLLLLASFFPAGQA). The region spanning 20-136 (SWGVSSPQDV…DVKGTLVTVT (117 aa)) is the Ig-like V-type domain. The Extracellular portion of the chain corresponds to 20-1641 (SWGVSSPQDV…ALHRLHQFQQ (1622 aa)). 4 disulfides stabilise this stretch: C36/C166, C41/C98, C160/C217, and C262/C305. Residues Y63, R116, and 122–126 (VNRWS) contribute to the N-acetylneuraminate site. 12 consecutive Ig-like C2-type domains span residues 139 to 233 (PRVP…IHLQ), 238 to 320 (PKGV…PPIS), 326 to 405 (AEVQ…GPVS), 411 to 507 (PPLT…LDFH), 511 to 593 (ARLL…AVLT), 601 to 705 (PTFT…ATFN), 708 to 785 (ATVL…AQLS), 799 to 894 (PKLS…FQVR), 898 to 977 (VQVS…APIS), 984 to 1083 (PRHV…ADFD), 1085 to 1165 (QAVN…RPIT), and 1176 to 1248 (RLTY…SPLG). N159 is a glycosylation site (N-linked (GlcNAc...) asparagine). Residues N265 and N339 are each glycosylated (N-linked (GlcNAc...) asparagine). Intrachain disulfides connect C346/C390 and C433/C491. An N-linked (GlcNAc...) asparagine glycan is attached at N499. 2 cysteine pairs are disulfide-bonded: C531–C575 and C624–C689. N697, N726, N730, and N741 each carry an N-linked (GlcNAc...) asparagine glycan. 2 disulfide bridges follow: C729–C774 and C817–C876. Residue N886 is glycosylated (N-linked (GlcNAc...) asparagine). Cystine bridges form between C916–C960 and C1005–C1067. N-linked (GlcNAc...) asparagine glycans are attached at residues N1104 and N1138. 2 cysteine pairs are disulfide-bonded: C1107/C1149 and C1193/C1241. N-linked (GlcNAc...) asparagine glycosylation occurs at N1251. Ig-like C2-type domains are found at residues 1259 to 1341 (EGVR…AALQ), 1350 to 1442 (VLSS…RLQV), 1445 to 1528 (ARVV…VMLR), and 1536 to 1631 (PTMM…FGVR). Disulfide bonds link C1281-C1324 and C1367-C1425. N-linked (GlcNAc...) asparagine glycosylation is found at N1462 and N1476. Cystine bridges form between C1465/C1511 and C1554/C1613. Residues 1642–1662 (LLWVLGLLVGLLLLLLGLGAC) form a helical membrane-spanning segment. Residues 1663-1709 (YTWRRRRVCKQSMGENSVEMAFQKETTQLIDPDAATCETSTCAPPLG) are Cytoplasmic-facing.

The protein belongs to the immunoglobulin superfamily. SIGLEC (sialic acid binding Ig-like lectin) family. As to quaternary structure, interacts with TYROBP. Interacts with CLEC10A. As to expression, expressed by macrophages in various tissues. High levels are found in spleen, lymph node, perivascular macrophages in brain and lower levels in bone marrow, liver Kupffer cells and lamina propria of colon and lung. Also expressed by inflammatory macrophages in rheumatoid arthritis.

It is found in the cell membrane. The protein resides in the secreted. In terms of biological role, macrophage-restricted adhesion molecule that mediates sialic-acid dependent binding to lymphocytes, including granulocytes, monocytes, natural killer cells, B-cells and CD8 T-cells. Plays a crucial role in limiting bacterial dissemination by engaging sialylated bacteria to promote effective phagocytosis and antigen presentation for the adaptive immune response. Mediates the uptake of various enveloped viruses via sialic acid recognition and subsequently induces the formation of intracellular compartments filled with virions (VCCs). In turn, enhances macrophage-to-T-cell transmission of several viruses including HIV-1 or SARS-CoV-2. Acts as an endocytic receptor mediating clathrin dependent endocytosis. Preferentially binds to alpha-2,3-linked sialic acid. Binds to SPN/CD43 on T-cells. May play a role in hemopoiesis. Plays a role in the inhibition of antiviral innate immune by promoting TBK1 degradation via TYROBP and TRIM27-mediated ubiquitination. Its function is as follows. (Microbial infection) Facilitates viral cytoplasmic entry into activated dendritic cells via recognition of sialylated gangliosides pesent on viral membrane. The chain is Sialoadhesin (SIGLEC1) from Homo sapiens (Human).